The following is a 724-amino-acid chain: Protein Aster-A (724 aa).

Residues 1 to 18 (MFDTTPHSGRSTPSSSPS) are compositionally biased toward low complexity. Residues 1–66 (MFDTTPHSGR…TPSTQSLGSR (66 aa)) are disordered. Polar residues predominate over residues 57–66 (TPSTQSLGSR). Residues 91-158 (EDFRKLFSKL…KEVTCLKKEK (68 aa)) enclose the GRAM domain. The disordered stretch occupies residues 256–336 (SSGAADRSQE…GPTTLGPLDL (81 aa)). Phosphoserine occurs at positions 263, 267, and 271. Polar residues predominate over residues 300–312 (DSQPDASSSQTVT). Positions 326–336 (DGPTTLGPLDL) are enriched in low complexity. Residues 367-538 (SGRLLINSVF…ELAKAEKLSL (172 aa)) enclose the VASt domain. Phosphoserine is present on serine 415. The segment at 560–579 (SWRAHGDGPQHPDPDPCARA) is disordered. Positions 563-575 (AHGDGPQHPDPDP) are enriched in basic and acidic residues. A helical transmembrane segment spans residues 610 to 630 (LISIVICVSLIILIALNVLLF).

Expressed in liver.

It is found in the endoplasmic reticulum membrane. The protein localises to the cell membrane. Its subcellular location is the cytoplasmic vesicle. It localises to the autophagosome. Its function is as follows. Cholesterol transporter that mediates non-vesicular transport of cholesterol from the plasma membrane (PM) to the endoplasmic reticulum (ER). Contains unique domains for binding cholesterol and the PM, thereby serving as a molecular bridge for the transfer of cholesterol from the PM to the ER. Plays a crucial role in cholesterol homeostasis and has the unique ability to localize to the PM based on the level of membrane cholesterol. In lipid-poor conditions localizes to the ER membrane and in response to excess cholesterol in the PM is recruited to the endoplasmic reticulum-plasma membrane contact sites (EPCS) which is mediated by the GRAM domain. At the EPCS, the sterol-binding VASt/ASTER domain binds to the cholesterol in the PM and facilitates its transfer from the PM to ER. May play a role in tumor progression. Plays a role in autophagy regulation and is required for biogenesis of the autophagosome. This function in autophagy requires its cholesterol-transfer activity. This is Protein Aster-A from Homo sapiens (Human).